The sequence spans 286 residues: Acetyl-coenzyme A carboxylase carboxyl transferase subunit beta (286 aa).

In terms of domain architecture, CoA carboxyltransferase N-terminal spans 28-286 (LMQKCSNCKK…KMHMDGRQLK (259 aa)). 4 residues coordinate Zn(2+): cysteine 32, cysteine 35, cysteine 51, and cysteine 54. A C4-type zinc finger spans residues 32-54 (CSNCKKIYYRKEMVKALQVCPNC).

It belongs to the AccD/PCCB family. Acetyl-CoA carboxylase is a heterohexamer composed of biotin carboxyl carrier protein (AccB), biotin carboxylase (AccC) and two subunits each of ACCase subunit alpha (AccA) and ACCase subunit beta (AccD). It depends on Zn(2+) as a cofactor.

Its subcellular location is the cytoplasm. It catalyses the reaction N(6)-carboxybiotinyl-L-lysyl-[protein] + acetyl-CoA = N(6)-biotinyl-L-lysyl-[protein] + malonyl-CoA. It functions in the pathway lipid metabolism; malonyl-CoA biosynthesis; malonyl-CoA from acetyl-CoA: step 1/1. Functionally, component of the acetyl coenzyme A carboxylase (ACC) complex. Biotin carboxylase (BC) catalyzes the carboxylation of biotin on its carrier protein (BCCP) and then the CO(2) group is transferred by the transcarboxylase to acetyl-CoA to form malonyl-CoA. This chain is Acetyl-coenzyme A carboxylase carboxyl transferase subunit beta, found in Oceanobacillus iheyensis (strain DSM 14371 / CIP 107618 / JCM 11309 / KCTC 3954 / HTE831).